The chain runs to 463 residues: Quinolone resistance protein NorB (463 aa).

The next 14 helical transmembrane spans lie at 17–37 (IGIV…VNVV), 53–73 (IAVS…GGLA), 86–106 (IILN…LLLI), 107–127 (IGRL…LSII), 142–162 (YWSI…GAVA), 165–185 (LGWR…LFLI), 201–221 (FDIK…ILIT), 230–250 (SLLF…FIVL), 273–293 (TASN…NTFV), 299–319 (YSSL…LIMI), 334–354 (PMLI…LTFL), 357–377 (IFYV…LGIY), 403–423 (MASA…YAIV), and 435–455 (IALW…LLLV).

Belongs to the major facilitator superfamily. TCR/Tet family.

The protein localises to the cell membrane. Functionally, multidrug efflux pump that acts independently of NorA and is one of the factors that confers resistance against diverse quinolones and chemical compounds. The sequence is that of Quinolone resistance protein NorB (norB) from Staphylococcus aureus (strain COL).